The chain runs to 311 residues: MKRYIEICKPLWTLLPEGTIHEDERLCKHTYTQMGGAADLFITPQSYEETQTVLKFAHEHRVPVTLLGNGSNVIVKDGGIRGITLSLKKLNTITCTGVELVAQTGATIIEASRRARDAELTGLEFACGIPGTVGGAFYMNAGAYGGQIADVLESVLVLTEQGEFKTLSKEEFDFDYRKSVFSAKRYIALEGTFRLQKGDMAQIQAKMDELTIARETKQPLEYPSCGSVFKRPPGMFAGKLIQDSGLQGTRIGGAEVSKKHAGFIVNVDNATATEYMSLVRHVQQTVKDKFGVELETEVITIGEDIEEPVSD.

Residues M34–G198 form the FAD-binding PCMH-type domain. Residue R177 is part of the active site. S227 serves as the catalytic Proton donor. E297 is a catalytic residue.

This sequence belongs to the MurB family. FAD is required as a cofactor.

The protein resides in the cytoplasm. The enzyme catalyses UDP-N-acetyl-alpha-D-muramate + NADP(+) = UDP-N-acetyl-3-O-(1-carboxyvinyl)-alpha-D-glucosamine + NADPH + H(+). It participates in cell wall biogenesis; peptidoglycan biosynthesis. Its function is as follows. Cell wall formation. This Shouchella clausii (strain KSM-K16) (Alkalihalobacillus clausii) protein is UDP-N-acetylenolpyruvoylglucosamine reductase.